The chain runs to 428 residues: UPF0229 protein YeaH (428 aa).

The span at 78-90 (GNDHFIQNDRIER) shows a compositional bias: basic and acidic residues. Residues 78-111 (GNDHFIQNDRIERPQGGGGGGSGSGQGQASQDGE) form a disordered region. A compositionally biased stretch (gly residues) spans 92 to 103 (QGGGGGGSGSGQ).

The protein belongs to the UPF0229 family.

The polypeptide is UPF0229 protein YeaH (Salmonella heidelberg (strain SL476)).